We begin with the raw amino-acid sequence, 101 residues long: Nucleoid-associated protein Bind_0255 (101 aa).

The protein belongs to the YbaB/EbfC family. In terms of assembly, homodimer.

The protein resides in the cytoplasm. Its subcellular location is the nucleoid. Its function is as follows. Binds to DNA and alters its conformation. May be involved in regulation of gene expression, nucleoid organization and DNA protection. This Beijerinckia indica subsp. indica (strain ATCC 9039 / DSM 1715 / NCIMB 8712) protein is Nucleoid-associated protein Bind_0255.